Here is a 196-residue protein sequence, read N- to C-terminus: MVKIGVLGLQGAVREHVKSVEASGAEAVVVKRIEQLEEIDGLILPGGESTTMRRLIDKYDFMEPLRTFAKSGKPMFGTCAGMILLAKTLIGYDEAHIGAMDITVERNAFGRQKDSFEAALSIKGVGEDFVGVFIRAPYVVNVADDVEVLSTHGDRMVAVRQGPFLAASFHPELTDDHRVTAYFVEMVKEAKMKKVV.

L-glutamine is bound at residue 47 to 49; sequence GES. C79 (nucleophile) is an active-site residue. Residues R106 and 134–135 each bind L-glutamine; that span reads IR. Catalysis depends on charge relay system residues H170 and E172.

It belongs to the glutaminase PdxT/SNO family. In terms of assembly, in the presence of PdxS, forms a dodecamer of heterodimers. Only shows activity in the heterodimer.

The enzyme catalyses aldehydo-D-ribose 5-phosphate + D-glyceraldehyde 3-phosphate + L-glutamine = pyridoxal 5'-phosphate + L-glutamate + phosphate + 3 H2O + H(+). It catalyses the reaction L-glutamine + H2O = L-glutamate + NH4(+). It participates in cofactor biosynthesis; pyridoxal 5'-phosphate biosynthesis. Functionally, catalyzes the hydrolysis of glutamine to glutamate and ammonia as part of the biosynthesis of pyridoxal 5'-phosphate. The resulting ammonia molecule is channeled to the active site of PdxS. In Bacillus cereus (strain ZK / E33L), this protein is Pyridoxal 5'-phosphate synthase subunit PdxT.